The sequence spans 61 residues: Small ribosomal subunit protein uS14 (61 aa).

Zn(2+)-binding residues include Cys-24, Cys-27, Cys-40, and Cys-43.

The protein belongs to the universal ribosomal protein uS14 family. Zinc-binding uS14 subfamily. In terms of assembly, part of the 30S ribosomal subunit. Contacts proteins S3 and S10. Zn(2+) serves as cofactor.

Functionally, binds 16S rRNA, required for the assembly of 30S particles and may also be responsible for determining the conformation of the 16S rRNA at the A site. The protein is Small ribosomal subunit protein uS14 of Thermobifida fusca (strain YX).